The following is a 440-amino-acid chain: UDP-N-acetylmuramoylalanine--D-glutamate ligase (440 aa).

Position 113 to 119 (113 to 119 (GTNGKST)) interacts with ATP.

The protein belongs to the MurCDEF family.

It is found in the cytoplasm. It catalyses the reaction UDP-N-acetyl-alpha-D-muramoyl-L-alanine + D-glutamate + ATP = UDP-N-acetyl-alpha-D-muramoyl-L-alanyl-D-glutamate + ADP + phosphate + H(+). The protein operates within cell wall biogenesis; peptidoglycan biosynthesis. Cell wall formation. Catalyzes the addition of glutamate to the nucleotide precursor UDP-N-acetylmuramoyl-L-alanine (UMA). In Buchnera aphidicola subsp. Acyrthosiphon pisum (strain Tuc7), this protein is UDP-N-acetylmuramoylalanine--D-glutamate ligase.